The primary structure comprises 431 residues: UDP-N-acetylglucosamine 1-carboxyvinyltransferase (431 aa).

22-23 serves as a coordination point for phosphoenolpyruvate; that stretch reads KN. Residue Arg102 participates in UDP-N-acetyl-alpha-D-glucosamine binding. Cys126 acts as the Proton donor in catalysis. A 2-(S-cysteinyl)pyruvic acid O-phosphothioketal modification is found at Cys126. UDP-N-acetyl-alpha-D-glucosamine is bound by residues Asp318 and Ile340.

Belongs to the EPSP synthase family. MurA subfamily.

The protein resides in the cytoplasm. It catalyses the reaction phosphoenolpyruvate + UDP-N-acetyl-alpha-D-glucosamine = UDP-N-acetyl-3-O-(1-carboxyvinyl)-alpha-D-glucosamine + phosphate. The protein operates within cell wall biogenesis; peptidoglycan biosynthesis. Its function is as follows. Cell wall formation. Adds enolpyruvyl to UDP-N-acetylglucosamine. This chain is UDP-N-acetylglucosamine 1-carboxyvinyltransferase, found in Bartonella henselae (strain ATCC 49882 / DSM 28221 / CCUG 30454 / Houston 1) (Rochalimaea henselae).